Reading from the N-terminus, the 515-residue chain is Envelope glycoprotein (515 aa).

The signal sequence occupies residues 1–33 (MPKERRSRRRPQPIIRWVSLTLTLLALCQPIQT). Residues 34–435 (WRCSLSLGNQ…LGLTAWVRET (402 aa)) lie on the Extracellular side of the membrane. N-linked (GlcNAc...) asparagine; by host glycans are attached at residues Asn-129 and Asn-203. The CXXC motif lies at 212–215 (CAIC). Cystine bridges form between Cys-212/Cys-215, Cys-212/Cys-392, and Cys-384/Cys-391. 5 N-linked (GlcNAc...) asparagine; by host glycosylation sites follow: Asn-230, Asn-251, Asn-256, Asn-271, and Asn-287. A fusion peptide region spans residues 304–324 (VAALTLGLALSVGLTGINVAV). Coiled-coil stretches lie at residues 330 to 376 (QRLT…WLYI) and 388 to 420 (NEPCCFLRIQNDSIIRLGDLQPLSQRVSTDWQW). The N-linked (GlcNAc...) asparagine; by host glycan is linked to Asn-351. The interval 365–381 (AQNRRGLDWLYIRLGFQ) is immunosuppression. The CX6CC motif lies at 384–392 (CPTINEPCC). N-linked (GlcNAc...) asparagine; by host glycosylation is present at Asn-398. Residues 436-456 (IHSVLSLFLLALFLLFLAPCL) form a helical membrane-spanning segment. Cys-455 carries the S-palmitoyl cysteine; by host lipid modification. Residues 457 to 515 (IKCLTSRLLKLLRQAPHFPEISFPPKPDSDYQALLPSAPEIYSHLSPTKPDYINLRPCP) are Cytoplasmic-facing.

The mature envelope protein (Env) consists of a trimer of SU-TM heterodimers attached by a labile interchain disulfide bond. Post-translationally, specific enzymatic cleavages in vivo yield mature proteins. Envelope glycoproteins are synthesized as an inactive precursor that is N-glycosylated and processed likely by host cell furin or by a furin-like protease in the Golgi to yield the mature SU and TM proteins. The cleavage site between SU and TM requires the minimal sequence [KR]-X-[KR]-R. In terms of processing, the CXXC motif is highly conserved across a broad range of retroviral envelope proteins. It is thought to participate in the formation of a labile disulfide bond possibly with the CX6CC motif present in the transmembrane protein. Isomerization of the intersubunit disulfide bond to an SU intrachain disulfide bond is thought to occur upon receptor recognition in order to allow membrane fusion. The transmembrane protein is palmitoylated.

Its subcellular location is the virion membrane. The protein resides in the host cell membrane. Its function is as follows. The surface protein (SU) attaches the virus to the host cell by binding to its receptor. This interaction triggers the refolding of the transmembrane protein (TM) and is thought to activate its fusogenic potential by unmasking its fusion peptide. Fusion occurs at the host cell plasma membrane. Functionally, the transmembrane protein (TM) acts as a class I viral fusion protein. Under the current model, the protein has at least 3 conformational states: pre-fusion native state, pre-hairpin intermediate state, and post-fusion hairpin state. During viral and target cell membrane fusion, the coiled coil regions (heptad repeats) assume a trimer-of-hairpins structure, positioning the fusion peptide in close proximity to the C-terminal region of the ectodomain. The formation of this structure appears to drive apposition and subsequent fusion of viral and target cell membranes. Membranes fusion leads to delivery of the nucleocapsid into the cytoplasm. The sequence is that of Envelope glycoprotein (env) from Bovine leukemia virus (isolate Belgium LB59) (BLV).